A 578-amino-acid chain; its full sequence is Probable cytochrome c oxidase subunit 1-alpha (578 aa).

The segment at 1-21 is disordered; sequence MSILNEPQGASAAEDSYENEL. The helical transmembrane segment at 44 to 64 threads the bilayer; sequence IGTMYLVTSFAFFVIGGVMAL. Residue His-90 coordinates Fe(II)-heme a. The next 6 helical transmembrane spans lie at 93–113, 125–145, 174–194, 217–237, 262–282, and 294–314; these read IMLLMFATPLFAGFANWIMPL, LNMFAYWLYLFGSTIAVGGFL, LWIMGLAFSGFGTILGSVNFI, VLLTGVLVLLAFPVLAAALFA, LFWFFGHPEVYIIALPFFGIV, and IFGYMGLIGATIAIAGLSVTV. 2 residues coordinate Cu cation: His-268 and Tyr-272. Residues 268 to 272 constitute a cross-link (1'-histidyl-3'-tyrosine (His-Tyr)); that stretch reads HPEVY. Residues His-317 and His-318 each contribute to the Cu cation site. Transmembrane regions (helical) follow at residues 319 to 339 and 363 to 383; these read MYVTGGVLLPFFSFMTFLIAV and MLWSTGFLITFLFGGLTGVIL. A heme a3-binding site is contributed by His-401. Transmembrane regions (helical) follow at residues 402-422, 437-457, and 480-500; these read FHYVVFGTVVFAMFAGFHFWW, ITFWTLFVGFHGTFLVQHWLG, and ISTISSFLLGMSILPFFYNIW. His-403 is a Fe(II)-heme a binding site.

It belongs to the heme-copper respiratory oxidase family. In terms of assembly, associates with subunits II, III and IV to form cytochrome c oxidase. The cofactor is Cu(2+). Requires heme as cofactor.

It localises to the cell membrane. It catalyses the reaction 4 Fe(II)-[cytochrome c] + O2 + 8 H(+)(in) = 4 Fe(III)-[cytochrome c] + 2 H2O + 4 H(+)(out). It functions in the pathway energy metabolism; oxidative phosphorylation. In terms of biological role, cytochrome c oxidase is the component of the respiratory chain that catalyzes the reduction of oxygen to water. Subunits 1-3 form the functional core of the enzyme complex. CO I is the catalytic subunit of the enzyme. Electrons originating in cytochrome c are transferred via the copper A center of subunit 2 and heme A of subunit 1 to the bimetallic center formed by heme A3 and copper B. The chain is Probable cytochrome c oxidase subunit 1-alpha (ctaD1) from Streptomyces coelicolor (strain ATCC BAA-471 / A3(2) / M145).